A 1396-amino-acid chain; its full sequence is G2/mitotic-specific cyclin-B3 (1396 aa).

Disordered stretches follow at residues 1–64 (MPPP…TNAS), 259–398 (KEKP…PQME), and 477–500 (TTEKDPPSQWPSALPKKHISPGEL). Residues 10–34 (SKLETEKAQSNKITPREEQQSEKIG) show a composition bias toward basic and acidic residues. A D-box motif is present at residues 54-62 (RSVFEDVTN). Residues 264–273 (VKKPHFRKKK) are compositionally biased toward basic residues. The span at 306-315 (LQENTNNKDA) shows a compositional bias: polar residues. Phosphoserine is present on S703. Positions 775 to 796 (VDEPLSHQSPHIQNHSDTTKEA) are disordered. The segment covering 780 to 790 (SHQSPHIQNHS) has biased composition (polar residues).

It belongs to the cyclin family. Cyclin AB subfamily. As to quaternary structure, interacts with CDK2 kinase. Post-translationally, ubiquitinated. Ubiquitination leads to its degradation during anaphase entry, after degradation of CCNB1. Expressed in testis. Also expressed in the fetal ovary, but not in the adult.

It is found in the nucleus. In terms of biological role, cyclins are positive regulatory subunits of the cyclin-dependent kinases (CDKs), and thereby play an essential role in the control of the cell cycle, notably via their destruction during cell division. Its tissue specificity suggest that it may be required during early meiotic prophase I. The chain is G2/mitotic-specific cyclin-B3 (Ccnb3) from Mus musculus (Mouse).